The chain runs to 299 residues: Phosphoribosylaminoimidazole-succinocarboxamide synthase (299 aa).

A disordered region spans residues 259–279 (PESGWDRKSEQPPPPLPQHVV).

This sequence belongs to the SAICAR synthetase family.

It carries out the reaction 5-amino-1-(5-phospho-D-ribosyl)imidazole-4-carboxylate + L-aspartate + ATP = (2S)-2-[5-amino-1-(5-phospho-beta-D-ribosyl)imidazole-4-carboxamido]succinate + ADP + phosphate + 2 H(+). It participates in purine metabolism; IMP biosynthesis via de novo pathway; 5-amino-1-(5-phospho-D-ribosyl)imidazole-4-carboxamide from 5-amino-1-(5-phospho-D-ribosyl)imidazole-4-carboxylate: step 1/2. The polypeptide is Phosphoribosylaminoimidazole-succinocarboxamide synthase (Streptomyces avermitilis (strain ATCC 31267 / DSM 46492 / JCM 5070 / NBRC 14893 / NCIMB 12804 / NRRL 8165 / MA-4680)).